A 253-amino-acid chain; its full sequence is 5'/3'-nucleotidase SurE (253 aa).

A divalent metal cation-binding residues include Asp-8, Asp-9, Ser-39, and Asn-92.

This sequence belongs to the SurE nucleotidase family. A divalent metal cation serves as cofactor.

It is found in the cytoplasm. It catalyses the reaction a ribonucleoside 5'-phosphate + H2O = a ribonucleoside + phosphate. It carries out the reaction a ribonucleoside 3'-phosphate + H2O = a ribonucleoside + phosphate. The enzyme catalyses [phosphate](n) + H2O = [phosphate](n-1) + phosphate + H(+). In terms of biological role, nucleotidase with a broad substrate specificity as it can dephosphorylate various ribo- and deoxyribonucleoside 5'-monophosphates and ribonucleoside 3'-monophosphates with highest affinity to 3'-AMP. Also hydrolyzes polyphosphate (exopolyphosphatase activity) with the preference for short-chain-length substrates (P20-25). Might be involved in the regulation of dNTP and NTP pools, and in the turnover of 3'-mononucleotides produced by numerous intracellular RNases (T1, T2, and F) during the degradation of various RNAs. This chain is 5'/3'-nucleotidase SurE, found in Salmonella arizonae (strain ATCC BAA-731 / CDC346-86 / RSK2980).